A 156-amino-acid polypeptide reads, in one-letter code: MPRKGPAPKRPIDIDPVYGSQLVSQLVSKVLQDGKKQVAQRIVYTALEGCREKTGTDPVVTLKRALDNVKPAIEVKSRRVGGATYQVPIEVKGTRGTTLALRWLVGYAQDRREKTMHERLMNEILDASNGLGAAVKKREDTHKMAESNKAFAHYRW.

The protein belongs to the universal ribosomal protein uS7 family. As to quaternary structure, part of the 30S ribosomal subunit. Contacts proteins S9 and S11.

One of the primary rRNA binding proteins, it binds directly to 16S rRNA where it nucleates assembly of the head domain of the 30S subunit. Is located at the subunit interface close to the decoding center, probably blocks exit of the E-site tRNA. The sequence is that of Small ribosomal subunit protein uS7 from Nocardioides sp. (strain ATCC BAA-499 / JS614).